Reading from the N-terminus, the 139-residue chain is Transcription antitermination protein NusB (139 aa).

The protein belongs to the NusB family.

Its function is as follows. Involved in transcription antitermination. Required for transcription of ribosomal RNA (rRNA) genes. Binds specifically to the boxA antiterminator sequence of the ribosomal RNA (rrn) operons. In Pectobacterium carotovorum subsp. carotovorum (strain PC1), this protein is Transcription antitermination protein NusB.